A 1049-amino-acid chain; its full sequence is Probable disease resistance protein RF9 (1049 aa).

Positions 25-41 form a coiled coil; that stretch reads QGVEDQVTELKRDLNLL. The segment at 139 to 158 is disordered; sequence GYKQPQGDKQREMRPRFSKD. Residues 144–158 are compositionally biased toward basic and acidic residues; the sequence is QGDKQREMRPRFSKD. In terms of domain architecture, NB-ARC spans 147-460; that stretch reads KQREMRPRFS…AEGIFQPRHY (314 aa). 190–197 is an ATP binding site; the sequence is GMGGLGKT. 10 LRR repeats span residues 584–608, 609–634, 657–682, 683–707, 776–799, 800–827, 849–873, 896–923, 945–968, and 990–1015; these read LELLRVLDIHRAKLKGGKLASSIGQ, LIHLRYLNLKHAEVTHIPYSLGNLKL, MQQLRYLALPKDMGRKTKLELSNLVK, LETLKNFSTKNCSLEDLRGMVRLRT, PSHLTTLYLQHCRLEEDPMPILEK, LHQLKELELRRKSFSGKEMVCSSGGFPQ, MPVLHTLDIRDCRKLKQLPDEHLPS, LVHLKELQLLFRSFSGRIMVCAGSGFPQ, MPQLHTLEIRRCPKLKKLPNGFPQ, and MPLLHTLRIWNCPKLKQLPDGLRFIY.

This sequence belongs to the disease resistance NB-LRR family.

Its function is as follows. Potential disease resistance protein. The protein is Probable disease resistance protein RF9 (RF9) of Arabidopsis thaliana (Mouse-ear cress).